Reading from the N-terminus, the 292-residue chain is Phosphatidylserine decarboxylase proenzyme (292 aa).

Residues Asp-89, His-146, and Ser-252 each act as charge relay system; for autoendoproteolytic cleavage activity in the active site. Ser-252 (schiff-base intermediate with substrate; via pyruvic acid; for decarboxylase activity) is an active-site residue. Ser-252 carries the pyruvic acid (Ser); by autocatalysis modification.

It belongs to the phosphatidylserine decarboxylase family. PSD-B subfamily. Prokaryotic type I sub-subfamily. In terms of assembly, heterodimer of a large membrane-associated beta subunit and a small pyruvoyl-containing alpha subunit. Pyruvate serves as cofactor. Post-translationally, is synthesized initially as an inactive proenzyme. Formation of the active enzyme involves a self-maturation process in which the active site pyruvoyl group is generated from an internal serine residue via an autocatalytic post-translational modification. Two non-identical subunits are generated from the proenzyme in this reaction, and the pyruvate is formed at the N-terminus of the alpha chain, which is derived from the carboxyl end of the proenzyme. The autoendoproteolytic cleavage occurs by a canonical serine protease mechanism, in which the side chain hydroxyl group of the serine supplies its oxygen atom to form the C-terminus of the beta chain, while the remainder of the serine residue undergoes an oxidative deamination to produce ammonia and the pyruvoyl prosthetic group on the alpha chain. During this reaction, the Ser that is part of the protease active site of the proenzyme becomes the pyruvoyl prosthetic group, which constitutes an essential element of the active site of the mature decarboxylase.

The protein resides in the cell membrane. The catalysed reaction is a 1,2-diacyl-sn-glycero-3-phospho-L-serine + H(+) = a 1,2-diacyl-sn-glycero-3-phosphoethanolamine + CO2. It participates in phospholipid metabolism; phosphatidylethanolamine biosynthesis; phosphatidylethanolamine from CDP-diacylglycerol: step 2/2. Its function is as follows. Catalyzes the formation of phosphatidylethanolamine (PtdEtn) from phosphatidylserine (PtdSer). The protein is Phosphatidylserine decarboxylase proenzyme of Shewanella baltica (strain OS223).